Reading from the N-terminus, the 690-residue chain is Glycine--tRNA ligase beta subunit (690 aa).

It belongs to the class-II aminoacyl-tRNA synthetase family. In terms of assembly, tetramer of two alpha and two beta subunits.

The protein localises to the cytoplasm. It catalyses the reaction tRNA(Gly) + glycine + ATP = glycyl-tRNA(Gly) + AMP + diphosphate. The sequence is that of Glycine--tRNA ligase beta subunit from Proteus mirabilis (strain HI4320).